The following is a 1173-amino-acid chain: Thrombospondin-1 (1173 aa).

The signal sequence occupies residues 1-18 (MKGIFLLLMLVMPQTHQA). The region spanning 22 to 224 (GNDDNSVFDL…LQNVRFVFGT (203 aa)) is the Laminin G-like domain. The tract at residues 50-98 (HLVKGPDPSSPAYRIEDADLIPPLPEDKFQDLLDAIRADRGFILLATLR) is heparin-binding. N-linked (GlcNAc...) asparagine glycosylation is found at N155 and N158. C174 and C235 are disulfide-bonded. N-linked (GlcNAc...) asparagine glycosylation is found at N250 and N363. The VWFC domain maps to 319–376 (GVCLHNGVLHKNRDEWTVDSCTECTCQNSATICRKVSCPLMPCTNATIPDGECCPRCW). 3 TSP type-1 domains span residues 382-432 (DDDW…QDCD), 438-493 (DGGW…DPCP), and 495-550 (NGQW…QDCP). 18 disulfide bridges follow: C394/C426, C398/C431, C409/C416, C450/C487, C454/C492, C465/C477, C507/C544, C511/C549, C522/C534, C554/C565, C559/C575, C578/C589, C595/C611, C602/C620, C623/C647, C653/C666, C660/C679, and C681/C692. The region spanning 550–590 (PIDGCLSNPCFAGVKCTSFIDGSWKCGSCPPGYRGNGITCK) is the EGF-like 1 domain. Residues 649–693 (PRNPCADGTHDCHKNARCIYLGHYSDPMFRCECRPGYAGNGIICG) enclose the EGF-like 2 domain. TSP type-3 repeat units lie at residues 694-729 (EDTDLDGWPNENLTCVDNATYHCLKDNCPNLPNSGQ), 730-765 (EDYDKDGMGDACDKDDDNDGILDDRDNCQFVYNPAQ), 766-788 (YDYDRDDVGDRCDNCPYNHNPDQ), 789-824 (ADTDRNGEGDACSVDIDGDGILNERDNCAYVYNVDQ), 825-847 (KDTDKDGVGDQCDNCPLEHNPEQ), 848-885 (TDSDSDLIGDKCDNNQDIDEDGHQNNLDNCPYIPNANQ), 886-921 (ADHDKDGKGDACDHDDDNDGVPDDKDNCRLVPNPDQ), and 922-957 (TDTNGDGRGDACQYDFDDDSIPDAEDVCPENVEIST). Residues N705 and N711 are each glycosylated (N-linked (GlcNAc...) asparagine). 9 disulfide bridges follow: C708-C716, C721-C741, C757-C777, C780-C800, C816-C836, C839-C859, C877-C897, C913-C933, and C949-C1170. A disordered region spans residues 838–935 (NCPLEHNPEQ…GDGRGDACQY (98 aa)). A compositionally biased stretch (basic and acidic residues) spans 886–897 (ADHDKDGKGDAC). The Cell attachment site motif lies at 929–931 (RGD). The TSP C-terminal domain maps to 961-1173 (RKFQMVPLDP…SDLKYECRDS (213 aa)). N1070 carries an N-linked (GlcNAc...) asparagine glycan.

It belongs to the thrombospondin family. Homotrimer; disulfide-linked.

It localises to the secreted. The protein localises to the cell surface. It is found in the extracellular space. The protein resides in the extracellular matrix. Its subcellular location is the endoplasmic reticulum. It localises to the sarcoplasmic reticulum. Its function is as follows. Adhesive glycoprotein that mediates cell-to-cell and cell-to-matrix interactions. Can bind to fibrinogen, fibronectin, laminin, type V collagen and integrins alpha-V/beta-1, alpha-V/beta-3 and alpha-IIb/beta-3. May play a role in ER stress response. This is Thrombospondin-1 (thbs1) from Xenopus laevis (African clawed frog).